A 122-amino-acid chain; its full sequence is Large ribosomal subunit protein uL14 (122 aa).

This sequence belongs to the universal ribosomal protein uL14 family. Part of the 50S ribosomal subunit. Forms a cluster with proteins L3 and L19. In the 70S ribosome, L14 and L19 interact and together make contacts with the 16S rRNA in bridges B5 and B8.

Functionally, binds to 23S rRNA. Forms part of two intersubunit bridges in the 70S ribosome. This is Large ribosomal subunit protein uL14 from Borrelia hermsii (strain HS1 / DAH).